We begin with the raw amino-acid sequence, 102 residues long: Large ribosomal subunit protein bL21 (102 aa).

The protein belongs to the bacterial ribosomal protein bL21 family. Part of the 50S ribosomal subunit. Contacts protein L20.

This protein binds to 23S rRNA in the presence of protein L20. The chain is Large ribosomal subunit protein bL21 from Ligilactobacillus salivarius (strain UCC118) (Lactobacillus salivarius).